A 181-amino-acid chain; its full sequence is Trans-acting factor D (181 aa).

Its function is as follows. Plays a role in 2-micron plasmid partitioning. Antagonizes transcriptional repression of recombinase FLP by REP1-REP2. Regulates both stability and copy number of the plasmid by blocking the formation of the REP1-REP2 repressor complex. The polypeptide is Trans-acting factor D (Saccharomyces cerevisiae (strain ATCC 204508 / S288c) (Baker's yeast)).